The sequence spans 297 residues: Counting factor 45-1 (297 aa).

An N-terminal signal peptide occupies residues 1–20 (MNKLISLLLVCLVAIALVNA). Positions 24–235 (IDFDSDTVNS…SASTGSGSGS (212 aa)) constitute a Ch-type lysozyme domain. Active-site residues include Asp-29, Asp-119, and Glu-121. Residue Asn-166 is glycosylated (N-linked (GlcNAc...) asparagine). An S-G-S motif repeats region spans residues 231–296 (SGSGSSSGSS…GSSSGSGSGS (66 aa)). Residues 231 to 297 (SGSGSSSGSS…SSSGSGSGSS (67 aa)) form a disordered region. The segment covering 234 to 275 (GSSSGSSSGSSSGSSSGSGSSSGSGSSSGSSSGSGSGSSSSG) has biased composition (low complexity). Positions 276 to 297 (SGSGSGSSSGSGSSSGSGSGSS) are enriched in gly residues.

It belongs to the glycosyl hydrolase 25 family. Monomer. Component of the counting factor (CF) complex, which includes cf60, cf50, cf45-1 and ctnA.

The protein localises to the secreted. Cell-counting factor that limits the maximum size of the multicellular structure during aggregation. The sequence is that of Counting factor 45-1 (cf45-1) from Dictyostelium discoideum (Social amoeba).